An 849-amino-acid polypeptide reads, in one-letter code: DNA mismatch repair protein MutS (849 aa).

ATP is bound at residue 602–609 (GPNMSGKS).

Belongs to the DNA mismatch repair MutS family.

This protein is involved in the repair of mismatches in DNA. It is possible that it carries out the mismatch recognition step. This protein has a weak ATPase activity. The protein is DNA mismatch repair protein MutS of Streptococcus mutans serotype c (strain ATCC 700610 / UA159).